The sequence spans 64 residues: Large ribosomal subunit protein bL35 (64 aa).

The disordered stretch occupies residues 1-54 (MPKIKSNSGAAKRFKKTAHGFKHKQSFRSHILTKKSTKRKRQLRGMKQIHDADK). Basic residues predominate over residues 12 to 44 (KRFKKTAHGFKHKQSFRSHILTKKSTKRKRQLR).

It belongs to the bacterial ribosomal protein bL35 family.

The protein is Large ribosomal subunit protein bL35 of Chromohalobacter salexigens (strain ATCC BAA-138 / DSM 3043 / CIP 106854 / NCIMB 13768 / 1H11).